Here is a 270-residue protein sequence, read N- to C-terminus: uncharacterized protein (270 aa).

The first 22 residues, 1 to 22, serve as a signal peptide directing secretion; sequence MEYIKKIALYMSVLLLIIFIGG. A lipid anchor (N-palmitoyl cysteine) is attached at cysteine 23. Cysteine 23 carries S-diacylglycerol cysteine lipidation.

The protein belongs to the staphylococcal tandem lipoprotein family.

Its subcellular location is the cell membrane. This is an uncharacterized protein from Staphylococcus aureus (strain USA300).